An 88-amino-acid polypeptide reads, in one-letter code: Acyl-CoA-binding domain-containing protein 7 (88 aa).

The 86-residue stretch at 3–88 folds into the ACB domain; the sequence is LQADFDRAAE…AKELIEKYGI (86 aa). An acyl-CoA contacts are provided by residues R15, 30–34, K56, and Y75; that span reads YGLYK.

This sequence belongs to the ACBD7 family.

Functionally, binds medium- and long-chain acyl-CoA esters. The protein is Acyl-CoA-binding domain-containing protein 7 (ACBD7) of Homo sapiens (Human).